A 921-amino-acid polypeptide reads, in one-letter code: Leucine--tRNA ligase (921 aa).

Positions 80–90 (PYPSGKLHMGH) match the 'HIGH' region motif. The short motif at 667–671 (KMSKS) is the 'KMSKS' region element. Lys-670 provides a ligand contact to ATP.

This sequence belongs to the class-I aminoacyl-tRNA synthetase family.

It is found in the cytoplasm. The enzyme catalyses tRNA(Leu) + L-leucine + ATP = L-leucyl-tRNA(Leu) + AMP + diphosphate. The protein is Leucine--tRNA ligase of Psychrobacter arcticus (strain DSM 17307 / VKM B-2377 / 273-4).